Here is a 461-residue protein sequence, read N- to C-terminus: Asparagine--tRNA ligase (461 aa).

Belongs to the class-II aminoacyl-tRNA synthetase family. As to quaternary structure, homodimer.

The protein resides in the cytoplasm. The enzyme catalyses tRNA(Asn) + L-asparagine + ATP = L-asparaginyl-tRNA(Asn) + AMP + diphosphate + H(+). This is Asparagine--tRNA ligase from Geobacter metallireducens (strain ATCC 53774 / DSM 7210 / GS-15).